The following is a 432-amino-acid chain: Amino acid transporter ANT1 (432 aa).

The tract at residues 1–30 (MAIKDLTATTGDSSLPLIKSPPSETTGGDR) is disordered. Residues 1 to 35 (MAIKDLTATTGDSSLPLIKSPPSETTGGDRTSALQ) are Cytoplasmic-facing. The helical transmembrane segment at 36–56 (TLGNIIVSIVGTGVLGLPYAF) threads the bilayer. Over 57 to 62 (RIAGWL) the chain is Lumenal. A helical transmembrane segment spans residues 63-83 (AGSLGVIIVGFATYYCMLLLI). Residues 84–115 (QCRDKLESEEGEEESKTYGDLGFKCMGTKGRY) are Cytoplasmic-facing. The helical transmembrane segment at 116–136 (LTEFLIFTAQCGGSVAYLVFI) threads the bilayer. The Lumenal segment spans residues 137–147 (GRNLSSIFSSY). A helical membrane pass occupies residues 148–168 (GLSMVSFILILVPIEVGLSWI). Topologically, residues 169-172 (TSLS) are cytoplasmic. A helical transmembrane segment spans residues 173–193 (ALSPFSIFADICNIIAMCFVV). Over 194–219 (KENVEMVIEGDFSFSDRTAISSTIGG) the chain is Lumenal. A helical transmembrane segment spans residues 220 to 240 (LPFAGGVAVFCFEGFAMTLAL). The Cytoplasmic portion of the chain corresponds to 241–256 (ESSMREREAFPKLLAK). A helical transmembrane segment spans residues 257–277 (VLAGITFVYVLFGFCGYMAYG). The Lumenal portion of the chain corresponds to 278-292 (DQTKDIITLNLPNNW). A helical membrane pass occupies residues 293–313 (SAIAVQIGLCVGLTFTFPIMV). At 314 to 353 (HPLNEIIEQKLKRIDWLQKHHNGYSNETGSVSKFAIFTTR) the chain is on the cytoplasmic side. Residues 354–374 (TLLVVGLAAIASLVPGFGTFA) traverse the membrane as a helical segment. Over 375-379 (SLVGS) the chain is Lumenal. Residues 380–400 (TLCALISFVLPASYHLTLLGP) form a helical membrane-spanning segment. At 401–410 (SLNVWNKSID) the chain is on the cytoplasmic side. Residues 411–431 (VFIVICGLIFAVYGTYNTIVG) form a helical membrane-spanning segment. V432 is a topological domain (lumenal).

This sequence belongs to the amino acid/polyamine transporter 2 family. Amino acid/auxin permease (AAAP) (TC 2.A.18.8) subfamily. Ubiquitous. Highly expressed in flowers and cauline leaves and at lower levels in stems, leaves and roots.

Its subcellular location is the endoplasmic reticulum membrane. Its function is as follows. Translocates aromatic and neutral amino acids such as tyrosine, tryptophan, phenylalanine, histidine, proline, leucine, valine, glutamine, as well as arginine. Transports the auxins indole-3-acetic acid (IAA) and 2,4-dichlorophenoxyacetic acid (2,4-D). The chain is Amino acid transporter ANT1 from Arabidopsis thaliana (Mouse-ear cress).